The primary structure comprises 364 residues: Ribosomal RNA large subunit methyltransferase F (364 aa).

Residues M1–A17 show a composition bias toward low complexity. The disordered stretch occupies residues M1–L53. Over residues K33–L53 the composition is skewed to basic residues.

Belongs to the methyltransferase superfamily. METTL16/RlmF family.

It is found in the cytoplasm. It catalyses the reaction adenosine(1618) in 23S rRNA + S-adenosyl-L-methionine = N(6)-methyladenosine(1618) in 23S rRNA + S-adenosyl-L-homocysteine + H(+). Its function is as follows. Specifically methylates the adenine in position 1618 of 23S rRNA. The polypeptide is Ribosomal RNA large subunit methyltransferase F (Shewanella sp. (strain MR-7)).